Consider the following 65-residue polypeptide: Large ribosomal subunit protein bL35 (65 aa).

This sequence belongs to the bacterial ribosomal protein bL35 family.

This chain is Large ribosomal subunit protein bL35, found in Buchnera aphidicola subsp. Acyrthosiphon pisum (strain 5A).